The primary structure comprises 498 residues: Cytochrome P450 71B31 (498 aa).

A helical membrane pass occupies residues 3-23 (MFLGLLFLFPLFFILFKNLLP). Cys-441 is a heme binding site.

Belongs to the cytochrome P450 family. Heme is required as a cofactor.

The protein resides in the membrane. The protein is Cytochrome P450 71B31 (CYP71B31) of Arabidopsis thaliana (Mouse-ear cress).